Here is a 257-residue protein sequence, read N- to C-terminus: 3-methyl-2-oxobutanoate hydroxymethyltransferase (257 aa).

The Mg(2+) site is built by Asp42 and Asp86. 3-methyl-2-oxobutanoate contacts are provided by residues 42–43 (DS), Asp86, and Lys116. Residue Glu118 participates in Mg(2+) binding. The Proton acceptor role is filled by Glu185.

The protein belongs to the PanB family. Homodecamer; pentamer of dimers. Requires Mg(2+) as cofactor.

It localises to the cytoplasm. It catalyses the reaction 3-methyl-2-oxobutanoate + (6R)-5,10-methylene-5,6,7,8-tetrahydrofolate + H2O = 2-dehydropantoate + (6S)-5,6,7,8-tetrahydrofolate. The protein operates within cofactor biosynthesis; (R)-pantothenate biosynthesis; (R)-pantoate from 3-methyl-2-oxobutanoate: step 1/2. Its function is as follows. Catalyzes the reversible reaction in which hydroxymethyl group from 5,10-methylenetetrahydrofolate is transferred onto alpha-ketoisovalerate to form ketopantoate. The polypeptide is 3-methyl-2-oxobutanoate hydroxymethyltransferase (Prochlorococcus marinus subsp. pastoris (strain CCMP1986 / NIES-2087 / MED4)).